The chain runs to 997 residues: Sorting nexin-19 (997 aa).

The 179-residue stretch at 95–273 folds into the PXA domain; it reads ERQLEQEINR…ILVSIFSKYR (179 aa). 2 disordered regions span residues 313–333 and 413–437; these read SSPA…SPEI and GALE…APGT. Acidic residues predominate over residues 422–435; sequence GSECMEGAEAEEAP. The PX domain occupies 538–668; that stretch reads LRITGTITAR…EFLALNTDAR (131 aa). A 1,2-diacyl-sn-glycero-3-phospho-(1D-myo-inositol-3-phosphate) is bound by residues Arg-587 and Arg-634. The tract at residues 697–728 is disordered; sequence FPRSEPQSPTEELSEAENESKPQTEGKKASKS. Positions 714–724 are enriched in basic and acidic residues; it reads NESKPQTEGKK.

The protein belongs to the sorting nexin family. In terms of assembly, interacts with PTPRN.

The protein localises to the early endosome membrane. Its subcellular location is the cytoplasmic vesicle membrane. Plays a role in intracellular vesicle trafficking and exocytosis. May play a role in maintaining insulin-containing dense core vesicles in pancreatic beta-cells and in preventing their degradation. May play a role in insulin secretion. Interacts with membranes containing phosphatidylinositol 3-phosphate (PtdIns(3P)). This chain is Sorting nexin-19, found in Mus musculus (Mouse).